A 489-amino-acid chain; its full sequence is Mitogen-activated protein kinase adapter protein MST50 (489 aa).

Positions 1 to 56 (MSFNTGTAYAESDADDEYERDIHDSSPIDATDAEASPTESDPPSNEHTPTTYGYRS) are disordered. Polar residues predominate over residues 37–54 (PTESDPPSNEHTPTTYGY). The region spanning 69–132 (WTADECADFI…LRSVYDVKKA (64 aa)) is the SAM domain. Disordered regions lie at residues 207 to 285 (PLPH…AAER) and 309 to 379 (SINI…GSNA). Composition is skewed to polar residues over residues 256-265 (PKATSPTHLQ) and 328-346 (ASRSYRSDQPTPSSRSTFA). The Ras-associating domain maps to 377–457 (SNASVEIFKS…PMFMLRKTNN (81 aa)).

As to quaternary structure, interacts with MST7 and MST11. Interacts with MCK1, MKK2 and HIK1.

Its function is as follows. Mitogen-activated protein kinase adapter protein; part of the MST11-MST7-PMK1 MAP kinase (MAPK) cascade that is essential for appressorium formation, penetration and invasive growth. Binds to the MAPKKK MST11 and the MAPKK MST7 to maintain the stability of the MST11-MST7 complex for the phosphorylation of the MAPK PMK1. Is also involved in the MPS1 and OSM1 MAPK pathways, and especially plays a role in the activation of MPS1 in response to cell wall stress. Its function differs in the 3 MAPK pathways. The sequence is that of Mitogen-activated protein kinase adapter protein MST50 from Pyricularia oryzae (strain 70-15 / ATCC MYA-4617 / FGSC 8958) (Rice blast fungus).